The sequence spans 444 residues: CCA-adding enzyme (444 aa).

ATP contacts are provided by S57 and R60. CTP contacts are provided by S57 and R60. Positions 69, 71, and 124 each coordinate Mg(2+). 3 residues coordinate ATP: H147, K168, and Y177. CTP-binding residues include H147, K168, and Y177.

Belongs to the tRNA nucleotidyltransferase/poly(A) polymerase family. Archaeal CCA-adding enzyme subfamily. As to quaternary structure, homodimer. It depends on Mg(2+) as a cofactor.

It catalyses the reaction a tRNA precursor + 2 CTP + ATP = a tRNA with a 3' CCA end + 3 diphosphate. The enzyme catalyses a tRNA with a 3' CCA end + 2 CTP + ATP = a tRNA with a 3' CCACCA end + 3 diphosphate. Its function is as follows. Catalyzes the addition and repair of the essential 3'-terminal CCA sequence in tRNAs without using a nucleic acid template. Adds these three nucleotides in the order of C, C, and A to the tRNA nucleotide-73, using CTP and ATP as substrates and producing inorganic pyrophosphate. tRNA 3'-terminal CCA addition is required both for tRNA processing and repair. Also involved in tRNA surveillance by mediating tandem CCA addition to generate a CCACCA at the 3' terminus of unstable tRNAs. While stable tRNAs receive only 3'-terminal CCA, unstable tRNAs are marked with CCACCA and rapidly degraded. This chain is CCA-adding enzyme, found in Methanococcus maripaludis (strain DSM 14266 / JCM 13030 / NBRC 101832 / S2 / LL).